We begin with the raw amino-acid sequence, 1052 residues long: Swarming motility protein SwrC (1052 aa).

The protein belongs to the resistance-nodulation-cell division (RND) (TC 2.A.6) family.

Its function is as follows. Required for self-resistance to surfactin, an antimicrobial lipopeptide surfactant produced by B.subtilis. Also required for swarming motility. The sequence is that of Swarming motility protein SwrC (swrC) from Bacillus subtilis (strain 168).